The sequence spans 306 residues: Homoserine O-acetyltransferase (306 aa).

The Acyl-thioester intermediate role is filled by cysteine 142. Residues lysine 163 and serine 192 each contribute to the substrate site. The Proton acceptor role is filled by histidine 235. The active site involves glutamate 237. A substrate-binding site is contributed by arginine 249.

This sequence belongs to the MetA family.

The protein localises to the cytoplasm. It catalyses the reaction L-homoserine + acetyl-CoA = O-acetyl-L-homoserine + CoA. It participates in amino-acid biosynthesis; L-methionine biosynthesis via de novo pathway; O-acetyl-L-homoserine from L-homoserine: step 1/1. In terms of biological role, transfers an acetyl group from acetyl-CoA to L-homoserine, forming acetyl-L-homoserine. The chain is Homoserine O-acetyltransferase from Clostridium botulinum (strain Alaska E43 / Type E3).